The chain runs to 452 residues: Glycoprotein endo-alpha-1,2-mannosidase-like protein (452 aa).

At 1–8 the chain is on the cytoplasmic side; that stretch reads MARRRRRA. The chain crosses the membrane as a helical; Signal-anchor for type II membrane protein span at residues 9–29; it reads CIALFLVLLFAFGTLMGLRTL. The Lumenal segment spans residues 30–452; it reads KAPDGLPALG…FIKEKEQWLM (423 aa). A disordered region spans residues 40–90; sequence PGPELAPFERRPEGNPAPARAPAAPAAPPPPPPRTAAPRASLGPAEADPAP. A compositionally biased stretch (pro residues) spans 64 to 74; sequence PAAPPPPPPRT.

It belongs to the glycosyl hydrolase 99 family.

The protein localises to the golgi apparatus membrane. In Mus musculus (Mouse), this protein is Glycoprotein endo-alpha-1,2-mannosidase-like protein (Maneal).